A 495-amino-acid polypeptide reads, in one-letter code: Type-1 histone deacetylase 1 (495 aa).

D94 contributes to the substrate binding site. H136 serves as the catalytic Proton acceptor. G144 lines the substrate pocket. Residues D171, H173, and D259 each coordinate a divalent metal cation. Position 298 (Y298) interacts with substrate. The interval 372 to 495 (PAAAHHDIPP…EDADVDMDSG (124 aa)) is disordered. Residues 396–413 (DVRISEADRDKKVHHQGE) show a composition bias toward basic and acidic residues. Residues 425-443 (NYSNGLEATSTSRRNQVSI) show a composition bias toward polar residues. The span at 454–480 (NSRNNNNNNNNNNNNNNNNNNNSNNNN) shows a compositional bias: low complexity.

The protein belongs to the histone deacetylase family. HD type 1 subfamily.

It localises to the nucleus. It is found in the cytoplasm. The enzyme catalyses N(6)-acetyl-L-lysyl-[histone] + H2O = L-lysyl-[histone] + acetate. Responsible for the deacetylation of lysine residues on the N-terminal part of the core histones (H2A, H2B, H3 and H4). Histone deacetylation plays an important role in transcriptional regulation, cell cycle progression and developmental events. Histone deacetylases act via the formation of large multiprotein complexes. This is Type-1 histone deacetylase 1 (hdaA) from Dictyostelium discoideum (Social amoeba).